Consider the following 272-residue polypeptide: 1,4-dihydroxy-6-naphtoate synthase (272 aa).

Residues 55–57 and 107–108 contribute to the substrate site; these read KLS and TA. His145 (proton acceptor) is an active-site residue.

The protein belongs to the MqnA/MqnD family. MqnD subfamily.

It catalyses the reaction cyclic dehypoxanthinylfutalosinate = 1,4-dihydroxy-6-naphthoate + dihydroxyacetone. It functions in the pathway quinol/quinone metabolism; menaquinone biosynthesis. Its function is as follows. Catalyzes the conversion of cyclic dehypoxanthine futalosine (cyclic DHFL) into 1,4-dihydroxy-6-naphthoate, a step in the biosynthesis of menaquinone (MK, vitamin K2). The polypeptide is 1,4-dihydroxy-6-naphtoate synthase (Thermus thermophilus (strain ATCC 27634 / DSM 579 / HB8)).